Here is an 89-residue protein sequence, read N- to C-terminus: Small ribosomal subunit protein uS15 (89 aa).

This sequence belongs to the universal ribosomal protein uS15 family. In terms of assembly, part of the 30S ribosomal subunit. Forms a bridge to the 50S subunit in the 70S ribosome, contacting the 23S rRNA.

Functionally, one of the primary rRNA binding proteins, it binds directly to 16S rRNA where it helps nucleate assembly of the platform of the 30S subunit by binding and bridging several RNA helices of the 16S rRNA. Forms an intersubunit bridge (bridge B4) with the 23S rRNA of the 50S subunit in the ribosome. The polypeptide is Small ribosomal subunit protein uS15 (Lactiplantibacillus plantarum (strain ATCC BAA-793 / NCIMB 8826 / WCFS1) (Lactobacillus plantarum)).